A 1090-amino-acid polypeptide reads, in one-letter code: MSVYHLPTLLNPLVNAIFNCPEPERSPLKKLFANLKTRRFILLAPPSEYLLNYHDVKSKLPLHDLCYNAEFINSYILLMTENSYINTNSRDSHYETLDGKTVVIQWKNNVIHALNGFHIRRRLKILETKILPNFNDYFEGAADFIILFIDQPLNCEFVPNDYLQCFHNYEKIPKNAHAMPNLSIDSFQQERSSFENILHIHPARLTQLGQLFSSYRTLAPGDDPSRSIFESIVQQAFDGMKSDSLFKNFSNLYDLIHDYFELNLYDDIWSRLTTHFKGHEVDTEKYKYFSVNQLLTDFYSKDYGEFELHDITLIERRLHLASKHLQKLALTHSYAEKSKILVETLQKLSGTTEMDSHQLELPDGLNNMTMDADTLISLFVLVVCRSEQKHLKSHLYYLQNFSNNSSSTKFGILGYAVSTLEAVVCYFEDFNKNTGNVAKANTLCEKTKNLLDKLSCENPTNEVEDLATYKDILTYRNEQGQSILSICITNHKNYILLDILSEYETDFPVEDLLEDETIDGSTLLIESIKAGNLEAAKVLIKIMLFNCTEEELVSYINKTDKYARTVAHYLTHEMDILKSIGNYIDWKRKNSSGQTPLFSIFRSYDQPNYEEMVKTAFDIANTWYRKHNSLFDYLDHTDNKGNSLLHVLKTNIPILLQLTKLDINEENYKGLTPLMVYVKYKRLSNIDAITKDRRLILEKVQNSTFFTCFDYAKDHSVLSKIGERGVKDSLFGLIYFHSLRYHNLNATTNITSVSNAEKPFATTVINMKTIQGLLRSILKDNPFTFLPLNTYIDEISHLNRSDLTIIGKTDVTSLLHQLTNCFNVLLFLKKIPENLFTDEASILYWMRINTSKRNQKPSGKENPKTMEPEEINMIQSFLRFNFDEISSFKASLNILRKVLIFINLKSDDFEDAYKGLNEMGRKLINSEASSAFKGIITNHNMFSELSLAELLENVRFLEQCTIQLSSFVQIILFEKIPNWWKHYGEFLALHKSYRKAFPNMVKPKSASDTSSRAPLGGFIETKREQSEQRLAVQIKASSKMLKELGSEIFVAHERLAEELSNYMEFRKACLDQRSLVAFATTNISVLQECV.

The VPS9 domain maps to Phe289–Asn436.

The protein belongs to the UPF0507 family.

The polypeptide is UPF0507 protein SCRG_01893 (Saccharomyces cerevisiae (strain RM11-1a) (Baker's yeast)).